An 89-amino-acid polypeptide reads, in one-letter code: Small ribosomal subunit protein uS15 (89 aa).

Belongs to the universal ribosomal protein uS15 family. As to quaternary structure, part of the 30S ribosomal subunit. Forms a bridge to the 50S subunit in the 70S ribosome, contacting the 23S rRNA.

In terms of biological role, one of the primary rRNA binding proteins, it binds directly to 16S rRNA where it helps nucleate assembly of the platform of the 30S subunit by binding and bridging several RNA helices of the 16S rRNA. Forms an intersubunit bridge (bridge B4) with the 23S rRNA of the 50S subunit in the ribosome. This is Small ribosomal subunit protein uS15 from Shewanella denitrificans (strain OS217 / ATCC BAA-1090 / DSM 15013).